The chain runs to 370 residues: Small ribosomal subunit biogenesis GTPase RsgA (370 aa).

Residues 111–270 (RSEGQILAAN…LIDTPGLRGV (160 aa)) form the CP-type G domain. Residues 158-161 (TKAD) and 212-220 (GQSGAGKST) contribute to the GTP site. Residues Cys-293, Cys-298, His-300, and Cys-306 each contribute to the Zn(2+) site.

It belongs to the TRAFAC class YlqF/YawG GTPase family. RsgA subfamily. As to quaternary structure, monomer. Associates with 30S ribosomal subunit, binds 16S rRNA. Requires Zn(2+) as cofactor.

It is found in the cytoplasm. Functionally, one of several proteins that assist in the late maturation steps of the functional core of the 30S ribosomal subunit. Helps release RbfA from mature subunits. May play a role in the assembly of ribosomal proteins into the subunit. Circularly permuted GTPase that catalyzes slow GTP hydrolysis, GTPase activity is stimulated by the 30S ribosomal subunit. This chain is Small ribosomal subunit biogenesis GTPase RsgA, found in Streptomyces avermitilis (strain ATCC 31267 / DSM 46492 / JCM 5070 / NBRC 14893 / NCIMB 12804 / NRRL 8165 / MA-4680).